The primary structure comprises 96 residues: MTNPHDIIIKPIITENSMDDMASKKYTFAVNKKANKIQVKQAVEAVFGVKVEKVNTMNMIGKVKRMGAKEGKRADWKKAIVTLRPDSKEIEFFEGM.

The protein belongs to the universal ribosomal protein uL23 family. Part of the 50S ribosomal subunit. Contacts protein L29, and trigger factor when it is bound to the ribosome.

In terms of biological role, one of the early assembly proteins it binds 23S rRNA. One of the proteins that surrounds the polypeptide exit tunnel on the outside of the ribosome. Forms the main docking site for trigger factor binding to the ribosome. This Alkaliphilus oremlandii (strain OhILAs) (Clostridium oremlandii (strain OhILAs)) protein is Large ribosomal subunit protein uL23.